A 345-amino-acid chain; its full sequence is rRNA 2'-O-methyltransferase fibrillarin (345 aa).

Positions M1 to I114 are disordered. The span at P8–G108 shows a compositional bias: gly residues. Asymmetric dimethylarginine occurs at positions 9, 23, 25, 41, 43, 49, 52, 59, 64, 72, 78, 84, 89, 94, and 99. Residues T198–T199, E217–F218, D242–A243, and D262–Q265 contribute to the S-adenosyl-L-methionine site.

It belongs to the methyltransferase superfamily. Fibrillarin family. Component of box C/D small nucleolar ribonucleoprotein (snoRNP) particles. It is associated with the U3, U8 and U13 small nuclear RNAs. By homology to other fibrillarins, some or all of the N-terminal domain arginines are modified to asymmetric dimethylarginine (DMA).

It is found in the nucleus. The protein resides in the nucleolus. It catalyses the reaction L-glutaminyl-[histone H2A] + S-adenosyl-L-methionine = N(5)-methyl-L-glutaminyl-[histone H2A] + S-adenosyl-L-homocysteine + H(+). S-adenosyl-L-methionine-dependent methyltransferase that has the ability to methylate both RNAs and proteins. Involved in pre-rRNA processing. Utilizes the methyl donor S-adenosyl-L-methionine to catalyze the site-specific 2'-hydroxyl methylation of ribose moieties in pre-ribosomal RNA. Site specificity is provided by a guide RNA that base pairs with the substrate. Methylation occurs at a characteristic distance from the sequence involved in base pairing with the guide RNA. Also acts as a protein methyltransferase by mediating methylation of 'Gln-105' of histone H2A (H2AQ105me), a modification that impairs binding of the FACT complex and is specifically present at 35S ribosomal DNA locus. The protein is rRNA 2'-O-methyltransferase fibrillarin of Drosophila erecta (Fruit fly).